Here is a 546-residue protein sequence, read N- to C-terminus: Probable protein kinase UbiB (546 aa).

A Protein kinase domain is found at Asp-124–Phe-502. ATP-binding positions include Leu-130–Val-138 and Lys-153. Asp-288 functions as the Proton acceptor in the catalytic mechanism. 2 consecutive transmembrane segments (helical) span residues Tyr-501–Pro-521 and Glu-522–Trp-542.

Belongs to the ABC1 family. UbiB subfamily.

Its subcellular location is the cell inner membrane. It participates in cofactor biosynthesis; ubiquinone biosynthesis [regulation]. In terms of biological role, is probably a protein kinase regulator of UbiI activity which is involved in aerobic coenzyme Q (ubiquinone) biosynthesis. In Escherichia coli O127:H6 (strain E2348/69 / EPEC), this protein is Probable protein kinase UbiB.